We begin with the raw amino-acid sequence, 168 residues long: Group IIF secretory phospholipase A2 (168 aa).

Residues 1 to 20 (MKKFFAIAVLAGSVVTTAHS) form the signal peptide. 7 disulfides stabilise this stretch: Cys-46–Cys-138, Cys-48–Cys-64, Cys-63–Cys-120, Cys-69–Cys-145, Cys-70–Cys-113, Cys-79–Cys-106, and Cys-98–Cys-111. Residues Tyr-47, Gly-49, and Gly-51 each coordinate Ca(2+). Residue His-67 is part of the active site. Position 68 (Asp-68) interacts with Ca(2+). N-linked (GlcNAc...) asparagine glycosylation is found at Asn-92 and Asn-102. Asp-114 is an active-site residue. The required for localization on the plasma membrane stretch occupies residues 139-168 (QGPTPNCSIYDPYPEEVTCGHGLPATPVST). A glycan (N-linked (GlcNAc...) asparagine) is linked at Asn-144.

The protein belongs to the phospholipase A2 family. Requires Ca(2+) as cofactor. Strongly expressed in testis.

The protein resides in the secreted. It localises to the cell membrane. It catalyses the reaction a 1,2-diacyl-sn-glycero-3-phosphocholine + H2O = a 1-acyl-sn-glycero-3-phosphocholine + a fatty acid + H(+). The catalysed reaction is 1-hexadecanoyl-2-(9Z-octadecenoyl)-sn-glycero-3-phospho-(1'-sn-glycerol) + H2O = 1-hexadecanoyl-sn-glycero-3-phospho-(1'-sn-glycerol) + (9Z)-octadecenoate + H(+). It carries out the reaction 1-hexadecanoyl-2-(9Z,12Z-octadecadienoyl)-sn-glycero-3-phosphoethanolamine + H2O = 1-hexadecanoyl-sn-glycero-3-phosphoethanolamine + (9Z,12Z)-octadecadienoate + H(+). The enzyme catalyses 1-hexadecanoyl-2-(5Z,8Z,11Z,14Z-eicosatetraenoyl)-sn-glycero-3-phosphoethanolamine + H2O = 1-hexadecanoyl-sn-glycero-3-phosphoethanolamine + (5Z,8Z,11Z,14Z)-eicosatetraenoate + H(+). It catalyses the reaction 1-hexadecanoyl-2-(9Z-octadecenoyl)-sn-glycero-3-phosphocholine + H2O = 1-hexadecanoyl-sn-glycero-3-phosphocholine + (9Z)-octadecenoate + H(+). The catalysed reaction is 1-hexadecanoyl-2-(9Z-octadecenoyl)-sn-glycero-3-phospho-L-serine + H2O = 1-hexadecanoyl-sn-glycero-3-phospho-L-serine + (9Z)-octadecenoate + H(+). Its function is as follows. Secretory calcium-dependent phospholipase A2 that primarily targets extracellular phospholipids. Hydrolyzes the ester bond of the fatty acyl group attached at the sn-2 position of phospholipids (phospholipase A2 activity), the catalytic efficiency decreasing in the following order: phosphatidylglycerols &gt; phosphatidylethanolamines &gt; phosphatidylcholines &gt; phosphatidylserines. May play a role in lipid mediator production in inflammatory conditions, by providing arachidonic acid to downstream cyclooxygenases and lipoxygenases. The protein is Group IIF secretory phospholipase A2 (Pla2g2f) of Mus musculus (Mouse).